A 323-amino-acid chain; its full sequence is Prostaglandin F synthase 1 (323 aa).

Residues 20 to 24 (GFGTY) and Asp-50 each bind NADP(+). Residue Tyr-55 is the Proton donor of the active site. Position 117 (His-117) interacts with substrate. Residues 166 to 167 (SN), Gln-190, 216 to 221 (YAALGA), and 270 to 280 (KSFNKKRIKEN) each bind NADP(+).

It belongs to the aldo/keto reductase family. In terms of assembly, monomer. Post-translationally, the N-terminus is blocked.

It localises to the cytoplasm. It catalyses the reaction prostaglandin F2alpha + NADP(+) = prostaglandin D2 + NADPH + H(+). The protein operates within lipid metabolism; prostaglandin biosynthesis. Its function is as follows. Catalyzes the reduction of PGD(2) and PGH(2) to PGF(2 alpha) and a stereoisomer, respectively. It has a broad substrate specificity and also reduces other carbonyl compounds. The sequence is that of Prostaglandin F synthase 1 from Bos taurus (Bovine).